A 434-amino-acid polypeptide reads, in one-letter code: Glutamine synthetase leaf isozyme, chloroplastic (434 aa).

2 disordered regions span residues 1-33 (MQVRRDDDGAGGCAGDAVPGGGEGQDGVPARQP) and 101-126 (TISKPVEDPSELPKWNYDGSSTGQAP). A chloroplast-targeting transit peptide spans 1–54 (MQVRRDDDGAGGCAGDAVPGGGEGQDGVPARQPAGRVWGVSRAARATSGFKVLA). The span at 10-25 (AGGCAGDAVPGGGEGQ) shows a compositional bias: gly residues. One can recognise a GS beta-grasp domain in the interval 81–161 (IIAEYIWVGG…VICDTYTPQG (81 aa)). Positions 168 to 434 (KRHMAAQIFS…LAAKKLALKV (267 aa)) constitute a GS catalytic domain.

The protein belongs to the glutamine synthetase family. Homooctamer.

It localises to the plastid. Its subcellular location is the chloroplast. It catalyses the reaction L-glutamate + NH4(+) + ATP = L-glutamine + ADP + phosphate + H(+). The light-modulated chloroplast enzyme, encoded by a nuclear gene and expressed primarily in leaves, is responsible for the reassimilation of the ammonia generated by photorespiration. The sequence is that of Glutamine synthetase leaf isozyme, chloroplastic from Hordeum vulgare (Barley).